The primary structure comprises 307 residues: Serine/threonine-protein phosphatase 4 catalytic subunit (307 aa).

N-acetylalanine is present on Ala2. Asp54, His56, Asp82, and Asn114 together coordinate Mn(2+). His115 serves as the catalytic Proton donor. Mn(2+) contacts are provided by His164 and His238. Leucine methyl ester is present on Leu307.

It belongs to the PPP phosphatase family. PP-4 (PP-X) subfamily. Serine/threonine-protein phosphatase 4 (PP4) occurs in different assemblies of the catalytic and one or more regulatory subunits. Component of the PP4 complexes PPP4C-PPP4R1, PPP4C-PPP4R2, PPP4C-PPP4R2-PPP4R3A, PPP4C-PPP4R2-PPP4R3B and PPP4C-PPP4R4. The PPP4C-PPP4R2 complex appears to be a tetramer composed of 2 molecules of PPP4C and 2 molecules of PPP4R2. Interacts with REL, NFKB1/p50 and RELA. Interacts with SMN1 and GEMIN4. Interacts with IRS4 (phosphorylated). Interacts with SMEK1/PPP4R3A; the interaction requires PP4R2. Interacts with HDAC3. Requires Mn(2+) as cofactor. Methylation at the C-terminal Leu-307 is critical for interactions with regulatory subunits and functions in DNA repair.

Its subcellular location is the cytoplasm. The protein resides in the nucleus. The protein localises to the cytoskeleton. It localises to the microtubule organizing center. It is found in the centrosome. The enzyme catalyses O-phospho-L-seryl-[protein] + H2O = L-seryl-[protein] + phosphate. It catalyses the reaction O-phospho-L-threonyl-[protein] + H2O = L-threonyl-[protein] + phosphate. In terms of biological role, protein phosphatase that is involved in many processes such as microtubule organization at centrosomes, maturation of spliceosomal snRNPs, apoptosis, DNA repair, tumor necrosis factor (TNF)-alpha signaling, activation of c-Jun N-terminal kinase MAPK8, regulation of histone acetylation, DNA damage checkpoint signaling, NF-kappa-B activation and cell migration. The PPP4C-PPP4R1 PP4 complex may play a role in dephosphorylation and regulation of HDAC3. The PPP4C-PPP4R2-PPP4R3A PP4 complex specifically dephosphorylates H2AX phosphorylated on Ser-140 (gamma-H2AX) generated during DNA replication and required for DNA DSB repair. Dephosphorylates NDEL1 at CDK1 phosphorylation sites and negatively regulates CDK1 activity in interphase. In response to DNA damage, catalyzes RPA2 dephosphorylation, an essential step for DNA repair since it allows the efficient RPA2-mediated recruitment of RAD51 to chromatin. The chain is Serine/threonine-protein phosphatase 4 catalytic subunit (PPP4C) from Oryctolagus cuniculus (Rabbit).